Reading from the N-terminus, the 98-residue chain is mRNA interferase toxin MqsR (98 aa).

Might be a dimer. Also reported to be a monomer. Crystallizes as a heterotetramer with MqsA, MqsR-MqsA(2)-MqsR. Purifies as a possible heterohexamer of 2 MqsR dimers and 1 MqsA dimer. When the 2 dissociate the MsqR mRNA interferase becomes active.

Toxic component of a type II toxin-antitoxin (TA) system. Plays a significant role in the control of biofilm formation and induction of persister cells in the presence of antibiotics. An mRNA interferase which has been reported to be translation-independent. It has also been reported to be translation-dependent. Cleavage has been reported to occur on either side of G in the sequence GCU. Also reported to cleave after C in GC(A/U) sequences. There are only 14 genes in E.coli W3110 (and probably also MG1655) that do not have a GCU sequence and thus are resistant to the mRNA interferase activity; among these is the gene for toxin GhoT. Overexpression of MqsR causes cessation of cell growth and inhibits cell proliferation via inhibition of translation as well as increasing persister cell formation; these effects are overcome by concomitant or subsequent expression of antitoxin MqsA. Cross-talk can occur between different TA systems. Ectopic expression of this toxin induces transcription of the relBEF TA system operon with specific cleavage of the relBEF mRNA produced. Regulates the expression of GhoT/GhoS, a type V TA system. Persistence depends on toxin GhoT activity, which MqsR controls at the post-transcriptional level by selectively degrading the antitoxin ghoS segment of the ghoST mRNA. Overexpression leads to a dramatic increase in tolerance to the antibiotic ofloxacin. This TA system mediates cell growth during bile acid deoxycholate stress by degrading mRNA for probable deoxycholate-binding protein YgiS; bile acid detergents such as deoxycholate are important for host defense against bacterial growth in the gall bladder and duodenum. Its function is as follows. Initially reported to act as a cotranscription factor with MqsA. Following further experiments, the MqsR-MqsA complex does not bind DNA and all reported data are actually due to a small fraction of free MqsA alone binding DNA. Addition of MqsR to a preformed MqsA-promoter DNA complex causes dissociation of the MqsA-DNA complex, probably causing derepression of MqsA-repressed transcripts. Does not bind DNA in the presence or absence of MqsA. The protein is mRNA interferase toxin MqsR of Escherichia coli (strain K12).